The primary structure comprises 718 residues: MCASVKYNIRGPALIPRMKTKHRIYYITLFSIVLLGLIATGMFQFWPHSIESSNDWNVEKRSIRDVPVVRLPADSPIPERGDLSCRMHTCFDVYRCGFNPKNKIKVYIYALKKYVDDFGVSVSNTISREYNELLMAISDSDYYTDDINRACLFVPSIDVLNQNTLRIKETAQAMAQLSRWDRGTNHLLFNMLPGGPPDYNTALDVPRDRALLAGGGFSTWTYRQGYDVSIPVYSPLSAEVDLPEKGPGPRQYFLLSSQVGLHPEYREDLEALQVKHGESVLVLDKCTNLSEGVLSVRKRCHKHQVFDYPQVLQEATFCVVLRGARLGQAVLSDVLQAGCVPVVIADSYILPFSEVLDWKRASVVVPEEKMSDVYSILQSIPQRQIEEMQRQARWFWEAYFQSIKAIALATLQIINDRIYPYAAISYEEWNDPPAVKWGSVSNPLFLPLIPPQSQGFTAIVLTYDRVESLFRVITEVSKVPSLSKLLVVWNNQNKNPPEDSLWPKIRVPLKVVRTAENKLSNRFFPYDEIETEAVLAIDDDIIMLTSDELQFGYEVWREFPDRLVGYPGRLHLWDHEMNKWKYESEWTNEVSMVLTGAAFYHKYFNYLYTYKMPGDIKNWVDAHMNCEDIAMNFLVANVTGKAVIKVTPRKKFKCPECTAIDGLSLDQTHMVERSECINKFASVFGTMPLKVVEHRADPVLYKDDFPEKLKSFPNIGSL.

Over 1–25 the chain is Cytoplasmic; that stretch reads MCASVKYNIRGPALIPRMKTKHRIY. Residues 26-46 traverse the membrane as a helical; Signal-anchor for type II membrane protein segment; the sequence is YITLFSIVLLGLIATGMFQFW. The Lumenal segment spans residues 47–718; it reads PHSIESSNDW…LKSFPNIGSL (672 aa). 4 disulfide bridges follow: C85-C90, C96-C151, C286-C300, and C318-C339. The N-linked (GlcNAc...) asparagine glycan is linked to N288. Residues L461, R465, N490, and N517 each coordinate UDP. Residues R465, N490, N517, R522, D538, D539, and D540 each contribute to the UDP-N-acetyl-alpha-D-glucosamine site. 2 residues coordinate UDP: D538 and D539. D540 contributes to the Mn(2+) binding site. 2 residues coordinate a protein: Y582 and S584. Cysteines 626 and 676 form a disulfide. UDP-N-acetyl-alpha-D-glucosamine-binding residues include E627 and D628. The N-linked (GlcNAc...) asparagine glycan is linked to N637. Residues K651 and K653 each contribute to the a protein site. R673 lines the UDP-N-acetyl-alpha-D-glucosamine pocket.

The protein belongs to the glycosyltransferase 47 family. As to quaternary structure, part of the heparan sulfate polymerase, a dimeric complex composed of EXT1 and EXT2. Could also form homooligomeric complexes. Interacts with NDST1. Interacts with GALNT5. It depends on Mn(2+) as a cofactor. N-glycosylated at Asn-637. Post-translationally, a soluble form is generated by proteolytic processing. Widely expressed.

The protein resides in the golgi apparatus membrane. It localises to the golgi apparatus. The protein localises to the cis-Golgi network membrane. Its subcellular location is the endoplasmic reticulum membrane. It is found in the secreted. It carries out the reaction 3-O-{[(1-&gt;4)-beta-D-GlcA-(1-&gt;4)-alpha-D-GlcNAc](n)-(1-&gt;4)-beta-D-GlcA-(1-&gt;3)-beta-D-Gal-(1-&gt;3)-beta-D-Gal-(1-&gt;4)-beta-D-Xyl}-L-seryl-[protein] + UDP-N-acetyl-alpha-D-glucosamine = 3-O-{alpha-D-GlcNAc-[(1-&gt;4)-beta-D-GlcA-(1-&gt;4)-alpha-D-GlcNAc](n)-(1-&gt;4)-beta-D-GlcA-(1-&gt;3)-beta-D-Gal-(1-&gt;3)-beta-D-Gal-(1-&gt;4)-beta-D-Xyl}-L-seryl-[protein] + UDP + H(+). Its pathway is protein modification; protein glycosylation. Functionally, glycosyltransferase forming with EXT1 the heterodimeric heparan sulfate polymerase which catalyzes the elongation of the heparan sulfate glycan backbone. Glycan backbone extension consists in the alternating transfer of (1-&gt;4)-beta-D-GlcA and (1-&gt;4)-alpha-D-GlcNAc residues from their respective UDP-sugar donors. Both EXT1 and EXT2 are required for the full activity of the polymerase since EXT1 bears the N-acetylglucosaminyl-proteoglycan 4-beta-glucuronosyltransferase activity within the complex while EXT2 carries the glucuronosyl-N-acetylglucosaminyl-proteoglycan 4-alpha-N-acetylglucosaminyltransferase activity. Heparan sulfate proteoglycans are ubiquitous components of the extracellular matrix and play an important role in tissue homeostasis and signaling. This Homo sapiens (Human) protein is Exostosin-2.